A 347-amino-acid polypeptide reads, in one-letter code: GMP reductase (347 aa).

Position 108 to 131 (108 to 131 (ADFEKTKQILAQSPALNFVCIDVA)) interacts with NADP(+). K(+) is bound by residues Gly-181 and Gly-183. Cys-186 acts as the Thioimidate intermediate in catalysis. 216 to 239 (IVSDGGCTMPGDVAKAFGGGADFV) contacts NADP(+).

Belongs to the IMPDH/GMPR family. GuaC type 1 subfamily. In terms of assembly, homotetramer.

The enzyme catalyses IMP + NH4(+) + NADP(+) = GMP + NADPH + 2 H(+). In terms of biological role, catalyzes the irreversible NADPH-dependent deamination of GMP to IMP. It functions in the conversion of nucleobase, nucleoside and nucleotide derivatives of G to A nucleotides, and in maintaining the intracellular balance of A and G nucleotides. The protein is GMP reductase of Citrobacter koseri (strain ATCC BAA-895 / CDC 4225-83 / SGSC4696).